Here is a 346-residue protein sequence, read N- to C-terminus: GTPase Obg (346 aa).

Residues M1–I158 enclose the Obg domain. Positions A159 to T332 constitute an OBG-type G domain. Residues G165–S172, F190–H194, D216–G219, N286–D289, and S313–L315 each bind GTP. Residues S172 and T192 each contribute to the Mg(2+) site.

It belongs to the TRAFAC class OBG-HflX-like GTPase superfamily. OBG GTPase family. In terms of assembly, monomer. It depends on Mg(2+) as a cofactor.

The protein resides in the cytoplasm. In terms of biological role, an essential GTPase which binds GTP, GDP and possibly (p)ppGpp with moderate affinity, with high nucleotide exchange rates and a fairly low GTP hydrolysis rate. Plays a role in control of the cell cycle, stress response, ribosome biogenesis and in those bacteria that undergo differentiation, in morphogenesis control. The chain is GTPase Obg from Opitutus terrae (strain DSM 11246 / JCM 15787 / PB90-1).